We begin with the raw amino-acid sequence, 215 residues long: ER lumen protein-retaining receptor B (215 aa).

Transmembrane regions (helical) follow at residues 6 to 26 (LAGD…IHTI), 55 to 77 (FVSL…IVWY), 98 to 118 (WFLV…FTFL), 120 to 140 (VLWT…LVLL), 149 to 169 (LTGQ…LNWI), and 178 to 198 (FVHW…ADFF).

It belongs to the ERD2 family.

It is found in the golgi apparatus membrane. It localises to the endoplasmic reticulum membrane. Determines the specificity of the luminal endoplasmic reticulum protein retention system. Required for the retro-transport of calreticulin-3 (CRT3) from the Golgi to the ER. Specifically required for elongation factor Tu receptor (EFR) function in response to the pathogen-associated molecular pattern (PAMP) elf18. The sequence is that of ER lumen protein-retaining receptor B (ERD2B) from Arabidopsis thaliana (Mouse-ear cress).